Here is a 338-residue protein sequence, read N- to C-terminus: Large ribosomal subunit protein uL10 (338 aa).

The interval 303-338 is disordered; the sequence is VEVSAAPAAEEEKEEEKKEEEKKEEDTGAAGLALLF. The span at 317–328 shows a compositional bias: basic and acidic residues; the sequence is EEKKEEEKKEED.

It belongs to the universal ribosomal protein uL10 family. Part of the 50S ribosomal subunit. Forms part of the ribosomal stalk which helps the ribosome interact with GTP-bound translation factors. Forms a heptameric L10(L12)2(L12)2(L12)2 complex, where L10 forms an elongated spine to which the L12 dimers bind in a sequential fashion.

Forms part of the ribosomal stalk, playing a central role in the interaction of the ribosome with GTP-bound translation factors. In Methanocaldococcus jannaschii (strain ATCC 43067 / DSM 2661 / JAL-1 / JCM 10045 / NBRC 100440) (Methanococcus jannaschii), this protein is Large ribosomal subunit protein uL10.